The following is a 415-amino-acid chain: Packaging protein 3 (415 aa).

The tract at residues 1–55 (MHPVLRQMRPPPQQRQEQEQRQTCRAPSPPPTASGGATSAVDAAADGDYEPPRRR) is disordered. Residues 1 to 173 (MHPVLRQMRP…VNQEINFQKS (173 aa)) are interaction with packaging protein 1. 2 positions are modified to phosphoserine; by host: Ser75 and Ser360. Residues 381 to 394 (GAGPGLAVAPARAG) are compositionally biased toward low complexity. Residues 381–415 (GAGPGLAVAPARAGNVGGVEEYDEDDEYEPEDGEY) are disordered. Residues 400–415 (EEYDEDDEYEPEDGEY) are compositionally biased toward acidic residues.

Belongs to the adenoviridae packaging protein 3 family. As to quaternary structure, part of the genome packaging complex composed of packaging proteins 1, 2 and 3; this complex specifically binds to the packaging sequence on the left end of viral genomic DNA and performs packaging of the viral genome. Interacts with hexon-linking protein IIIa; this interaction is required to promote correct genome packaging. In terms of processing, cleaved at different sites by the viral protease during virion maturation.

Its subcellular location is the host nucleus. In terms of biological role, involved in viral genome packaging through its interaction with packaging proteins 1 and 2. After proteolytic cleavage by adenovirus protease, L1 52/55k protein is removed from the capsid during viral maturation. The polypeptide is Packaging protein 3 (Homo sapiens (Human)).